We begin with the raw amino-acid sequence, 433 residues long: Polygalacturonase ADPG2 (433 aa).

Residues 1–24 form the signal peptide; sequence MARCTNLVTVFLLWALLMFSWCKA. 5 PbH1 repeats span residues 223–249, 250–271, 273–293, 303–324, and 332–353; these read CSNV…HITN, TQNI…SIES, SQNV…SIGS, VSGV…RIKT, and ASNI…IIDQ. Catalysis depends on D264, which acts as the Proton donor. The active site involves H287.

The protein belongs to the glycosyl hydrolase 28 family. In terms of tissue distribution, expressed in roots and in the abscission zone of the sepals, petals and stamens of flowers, at the base of cauline leaves and in the basal cell of trichomes from senescing leaves. Found at the site of lateral root emergence, in the dehiscence zone of anthers and maturing siliques. Also expressed early in anther development, at the time of microspore separation. Expressed in germinating seeds, at the point at which the radicle broke through the seed coat. Not expressed at the junction between the seed and the funiculus or in the dehiscence zone of anthers or pods.

It is found in the secreted. The protein resides in the cell wall. It carries out the reaction (1,4-alpha-D-galacturonosyl)n+m + H2O = (1,4-alpha-D-galacturonosyl)n + (1,4-alpha-D-galacturonosyl)m.. In terms of biological role, polygalacturonase involved in cell separation in the final stages of pod shatter, in anther dehiscence and in floral organ abscission. The sequence is that of Polygalacturonase ADPG2 (ADPG2) from Arabidopsis thaliana (Mouse-ear cress).